We begin with the raw amino-acid sequence, 176 residues long: V-type proton ATPase 16 kDa proteolipid subunit (176 aa).

The Lumenal segment spans residues 1–17 (MSVLLRSVTELCPVYSP). A helical transmembrane segment spans residues 18–38 (FFGSMGITASIVFTVFGGAYG). Topologically, residues 39–62 (TAKSSVGISSVGVMKPEFIMRSLF) are cytoplasmic. A helical membrane pass occupies residues 63-83 (PVVFAGVIGLYGLIVCIVLFI). Residues 84-98 (NVNKSEYSLNRAFLD) lie on the Lumenal side of the membrane. The chain crosses the membrane as a helical span at residues 99–119 (LGAGLTCGLCGLASGMSIGIS). Over 120–136 (GDCGVRGAAQQPKLFVS) the chain is Cytoplasmic. A helical transmembrane segment spans residues 137-157 (MLICLIFSEALALYGFIVALI). At 158 to 176 (MAATGDNSCVATASTSSSS) the chain is on the lumenal side.

It belongs to the V-ATPase proteolipid subunit family. As to quaternary structure, V-ATPase is a heteromultimeric enzyme composed of a peripheral catalytic V1 complex (main components: subunits A, B, C, D, E, and F) attached to an integral membrane V0 proton pore complex (main component: the proteolipid protein; which is present as a hexamer that forms the proton-conducting pore).

It localises to the vacuole membrane. Its function is as follows. Proton-conducting pore forming subunit of the membrane integral V0 complex of vacuolar ATPase. V-ATPase is responsible for acidifying a variety of intracellular compartments in eukaryotic cells. This chain is V-type proton ATPase 16 kDa proteolipid subunit (VMA3), found in Entamoeba dispar.